A 2471-amino-acid chain; its full sequence is Histidine protein kinase 1 (2471 aa).

The span at 1 to 10 (MSMNFFNSSE) shows a compositional bias: polar residues. Disordered regions lie at residues 1 to 30 (MSMN…TEHY), 52 to 75 (ETKK…VPPS), and 395 to 415 (RQGS…FNIG). Residues 11–30 (PARDHKPDQEKETVMTTEHY) show a composition bias toward basic and acidic residues. The Protein kinase domain maps to 358-636 (EHPSQSTDQK…DCHSLLHDLI (279 aa)). A Histidine kinase domain is found at 2004 to 2225 (NMSHEIRTPF…TFYVSVIMDA (222 aa)). His2007 is modified (phosphohistidine; by autocatalysis). A Response regulatory domain is found at 2340–2466 (RILLAEDNLL…ELRRILTKVG (127 aa)). A 4-aspartylphosphate modification is found at Asp2394.

The phosphorelay mechanism involves the sequential transfer of a phosphate group from His-2007 (H1) in the histidine kinase domain (transmitter domain) to Asp-2394 (D1) of the response regulatory domain (receiver domain). This transfer probably occurs between two CHK1 molecules, rather than intramolecularly.

It catalyses the reaction ATP + protein L-histidine = ADP + protein N-phospho-L-histidine.. Its function is as follows. Histidine kinase involved in a two-component signaling pathway that regulates cell wall mannan and glucan biosynthesis. Regulates quorum sensing as well as hyphal formation, biofilm formation, chlamidospore formation, and virulence. Plays a prominent role in phagocyte activation. Involved in the covering of the most potent pro-inflammatory cell wall molecules, the beta-glucans, underneath a dense mannan layer, so that the pathogen becomes partly invisible for immune cells such as phagocytes. In Candida albicans (strain SC5314 / ATCC MYA-2876) (Yeast), this protein is Histidine protein kinase 1 (CHK1).